Reading from the N-terminus, the 142-residue chain is Large ribosomal subunit protein uL11 (142 aa).

Belongs to the universal ribosomal protein uL11 family. In terms of assembly, part of the ribosomal stalk of the 50S ribosomal subunit. Interacts with L10 and the large rRNA to form the base of the stalk. L10 forms an elongated spine to which L12 dimers bind in a sequential fashion forming a multimeric L10(L12)X complex. Post-translationally, one or more lysine residues are methylated.

Its function is as follows. Forms part of the ribosomal stalk which helps the ribosome interact with GTP-bound translation factors. In Nitrobacter winogradskyi (strain ATCC 25391 / DSM 10237 / CIP 104748 / NCIMB 11846 / Nb-255), this protein is Large ribosomal subunit protein uL11.